The chain runs to 201 residues: Large ribosomal subunit protein uL4 (201 aa).

The interval 43–71 is disordered; it reads TRAQKTRSDVSGGGKKPWRQKGTGRARSG.

The protein belongs to the universal ribosomal protein uL4 family. As to quaternary structure, part of the 50S ribosomal subunit.

One of the primary rRNA binding proteins, this protein initially binds near the 5'-end of the 23S rRNA. It is important during the early stages of 50S assembly. It makes multiple contacts with different domains of the 23S rRNA in the assembled 50S subunit and ribosome. Its function is as follows. Forms part of the polypeptide exit tunnel. This is Large ribosomal subunit protein uL4 from Psychromonas ingrahamii (strain DSM 17664 / CCUG 51855 / 37).